A 127-amino-acid chain; its full sequence is Small ribosomal subunit protein uS13 (127 aa).

Residues 95-127 (GLPVHGQRTSTNARTRKGPRRAAVKKKGGAKKK) are disordered. The span at 108–127 (RTRKGPRRAAVKKKGGAKKK) shows a compositional bias: basic residues.

This sequence belongs to the universal ribosomal protein uS13 family. As to quaternary structure, part of the 30S ribosomal subunit. Forms a loose heterodimer with protein S19. Forms two bridges to the 50S subunit in the 70S ribosome.

Its function is as follows. Located at the top of the head of the 30S subunit, it contacts several helices of the 16S rRNA. In the 70S ribosome it contacts the 23S rRNA (bridge B1a) and protein L5 of the 50S subunit (bridge B1b), connecting the 2 subunits; these bridges are implicated in subunit movement. Contacts the tRNAs in the A and P-sites. In Desulfatibacillum aliphaticivorans, this protein is Small ribosomal subunit protein uS13.